A 306-amino-acid chain; its full sequence is UDP-N-acetylenolpyruvoylglucosamine reductase (306 aa).

Positions 33–197 (TGGEADFYLS…LEAAFTLEPG (165 aa)) constitute an FAD-binding PCMH-type domain. Arginine 176 is an active-site residue. Residue serine 226 is the Proton donor of the active site. Glutamate 296 is a catalytic residue.

This sequence belongs to the MurB family. The cofactor is FAD.

Its subcellular location is the cytoplasm. It catalyses the reaction UDP-N-acetyl-alpha-D-muramate + NADP(+) = UDP-N-acetyl-3-O-(1-carboxyvinyl)-alpha-D-glucosamine + NADPH + H(+). It participates in cell wall biogenesis; peptidoglycan biosynthesis. Cell wall formation. The sequence is that of UDP-N-acetylenolpyruvoylglucosamine reductase from Staphylococcus epidermidis (strain ATCC 35984 / DSM 28319 / BCRC 17069 / CCUG 31568 / BM 3577 / RP62A).